The primary structure comprises 212 residues: ATP-dependent dethiobiotin synthetase BioD (212 aa).

13–18 (GIGKTV) provides a ligand contact to ATP. Thr-17 is a binding site for Mg(2+). Residue Lys-33 is part of the active site. Residue Ser-37 coordinates substrate. A Mg(2+)-binding site is contributed by Glu-100. ATP-binding positions include 100–103 (EGAG) and 184–186 (PRL).

Belongs to the dethiobiotin synthetase family. Homodimer. Mg(2+) serves as cofactor.

The protein resides in the cytoplasm. It carries out the reaction (7R,8S)-7,8-diammoniononanoate + CO2 + ATP = (4R,5S)-dethiobiotin + ADP + phosphate + 3 H(+). Its pathway is cofactor biosynthesis; biotin biosynthesis; biotin from 7,8-diaminononanoate: step 1/2. Its function is as follows. Catalyzes a mechanistically unusual reaction, the ATP-dependent insertion of CO2 between the N7 and N8 nitrogen atoms of 7,8-diaminopelargonic acid (DAPA, also called 7,8-diammoniononanoate) to form a ureido ring. This Agrobacterium fabrum (strain C58 / ATCC 33970) (Agrobacterium tumefaciens (strain C58)) protein is ATP-dependent dethiobiotin synthetase BioD.